The following is a 246-amino-acid chain: Aspartate/glutamate leucyltransferase (246 aa).

This sequence belongs to the R-transferase family. Bpt subfamily.

It is found in the cytoplasm. The enzyme catalyses N-terminal L-glutamyl-[protein] + L-leucyl-tRNA(Leu) = N-terminal L-leucyl-L-glutamyl-[protein] + tRNA(Leu) + H(+). It catalyses the reaction N-terminal L-aspartyl-[protein] + L-leucyl-tRNA(Leu) = N-terminal L-leucyl-L-aspartyl-[protein] + tRNA(Leu) + H(+). Its function is as follows. Functions in the N-end rule pathway of protein degradation where it conjugates Leu from its aminoacyl-tRNA to the N-termini of proteins containing an N-terminal aspartate or glutamate. The polypeptide is Aspartate/glutamate leucyltransferase (Rhodospirillum rubrum (strain ATCC 11170 / ATH 1.1.1 / DSM 467 / LMG 4362 / NCIMB 8255 / S1)).